The sequence spans 727 residues: DNA topoisomerase 3 (727 aa).

Residues 3–136 form the Toprim domain; sequence KTVVLAEKPS…LKRLWISSVT (134 aa). Residues E9 and D105 each contribute to the Mg(2+) site. The 440-residue stretch at 153–592 folds into the Topo IA-type catalytic domain; it reads FENLYHSAVA…EMKEYAKQTI (440 aa). Residues 187–192 are interaction with DNA; it reads SCGRVQ. Residue Y310 is the O-(5'-phospho-DNA)-tyrosine intermediate of the active site. The segment covering 685–711 has biased composition (basic and acidic residues); that stretch reads RRAKDKNSKASKRDVHSYMKKQNKDEP. A disordered region spans residues 685–713; it reads RRAKDKNSKASKRDVHSYMKKQNKDEPIN.

The protein belongs to the type IA topoisomerase family. The cofactor is Mg(2+).

It catalyses the reaction ATP-independent breakage of single-stranded DNA, followed by passage and rejoining.. Releases the supercoiling and torsional tension of DNA, which is introduced during the DNA replication and transcription, by transiently cleaving and rejoining one strand of the DNA duplex. Introduces a single-strand break via transesterification at a target site in duplex DNA. The scissile phosphodiester is attacked by the catalytic tyrosine of the enzyme, resulting in the formation of a DNA-(5'-phosphotyrosyl)-enzyme intermediate and the expulsion of a 3'-OH DNA strand. The free DNA strand then undergoes passage around the unbroken strand, thus removing DNA supercoils. Finally, in the religation step, the DNA 3'-OH attacks the covalent intermediate to expel the active-site tyrosine and restore the DNA phosphodiester backbone. The polypeptide is DNA topoisomerase 3 (Bacillus licheniformis (strain ATCC 14580 / DSM 13 / JCM 2505 / CCUG 7422 / NBRC 12200 / NCIMB 9375 / NCTC 10341 / NRRL NRS-1264 / Gibson 46)).